Here is a 253-residue protein sequence, read N- to C-terminus: MMAQSKANGSHYALTAIGLGMLVLGVIMAMWNLVPGFSAAEKPTAQGSNKTEVGGGILKSKTFSVAYVLVGAGVMLLLLSICLSIRDKRKQRQGEDLAHVQHPTGAGPHAQEEDSQEEEEEDEEAASRYYVPSYEEVMNTNYSEARGEEQNPRLSISLPSYESLTGLDETTPTSTRADVEASPGNPPDRQNSKLAKRLKPLKVRRIKSEKLHLKDFRINLPDKNVPPPSIEPLTPPPQYDEVQEKAPDTRPPD.

Helical transmembrane passes span 17-37 (IGLG…VPGF) and 65-85 (VAYV…CLSI). 2 disordered regions span residues 93-133 (QGED…YVPS) and 164-253 (LTGL…RPPD). Over residues 113 to 124 (EDSQEEEEEDEE) the composition is skewed to acidic residues. Position 115 is a phosphoserine (serine 115). The segment covering 164-176 (LTGLDETTPTSTR) has biased composition (polar residues). Serine 182 and serine 192 each carry phosphoserine. The segment covering 194 to 205 (LAKRLKPLKVRR) has biased composition (basic residues). The segment covering 206–217 (IKSEKLHLKDFR) has biased composition (basic and acidic residues). The segment covering 224 to 238 (NVPPPSIEPLTPPPQ) has biased composition (pro residues). A compositionally biased stretch (basic and acidic residues) spans 242-253 (VQEKAPDTRPPD).

It is found in the membrane. The chain is Transmembrane protein 51 (TMEM51) from Homo sapiens (Human).